A 188-amino-acid polypeptide reads, in one-letter code: Protein salivary glands marred (188 aa).

It belongs to the TNFAIP8 family. In terms of assembly, interacts with the Ste20-like MAP kinase msn.

The protein resides in the cytoplasm. It is found in the cytoskeleton. Important for modulating JNK signaling, cytoskeletal remodeling and autophagy in larval salivary glands. During salivary gland development, involved in the positive regulation of the JNK signaling pathway, acting downstream of the TNF ligand egr and upstream of bsk. The chain is Protein salivary glands marred from Drosophila melanogaster (Fruit fly).